The sequence spans 140 residues: Small ribosomal subunit protein uS12 (140 aa).

Positions 1-20 are disordered; the sequence is MPTINQLVRKGRQSKVVKSD. A 3-methylthioaspartic acid modification is found at Asp-102. The interval 121–140 is disordered; it reads DGRMQGRSKYGTKRPKAAKK. The span at 130–140 shows a compositional bias: basic residues; that stretch reads YGTKRPKAAKK.

Belongs to the universal ribosomal protein uS12 family. Part of the 30S ribosomal subunit. Contacts proteins S8 and S17. May interact with IF1 in the 30S initiation complex.

Its function is as follows. With S4 and S5 plays an important role in translational accuracy. In terms of biological role, interacts with and stabilizes bases of the 16S rRNA that are involved in tRNA selection in the A site and with the mRNA backbone. Located at the interface of the 30S and 50S subunits, it traverses the body of the 30S subunit contacting proteins on the other side and probably holding the rRNA structure together. The combined cluster of proteins S8, S12 and S17 appears to hold together the shoulder and platform of the 30S subunit. The chain is Small ribosomal subunit protein uS12 from Exiguobacterium sibiricum (strain DSM 17290 / CCUG 55495 / CIP 109462 / JCM 13490 / 255-15).